Here is a 356-residue protein sequence, read N- to C-terminus: Glycerol-1-phosphate dehydrogenase [NAD(P)+] (356 aa).

Residues 103–107 (GRSID) and 125–128 (TAAS) each bind NAD(+). Residue Asp-130 participates in substrate binding. An NAD(+)-binding site is contributed by Ser-134. Asp-177 contributes to the substrate binding site. Zn(2+) is bound by residues Asp-177 and His-257. His-261 lines the substrate pocket. His-273 serves as a coordination point for Zn(2+).

It belongs to the glycerol-1-phosphate dehydrogenase family. The cofactor is Zn(2+).

It localises to the cytoplasm. It catalyses the reaction sn-glycerol 1-phosphate + NAD(+) = dihydroxyacetone phosphate + NADH + H(+). The enzyme catalyses sn-glycerol 1-phosphate + NADP(+) = dihydroxyacetone phosphate + NADPH + H(+). The protein operates within membrane lipid metabolism; glycerophospholipid metabolism. Functionally, catalyzes the NAD(P)H-dependent reduction of dihydroxyacetonephosphate (DHAP or glycerone phosphate) to glycerol 1-phosphate (G1P). The G1P thus generated is used as the glycerophosphate backbone of phospholipids in the cellular membranes of Archaea. The polypeptide is Glycerol-1-phosphate dehydrogenase [NAD(P)+] (Methanosarcina acetivorans (strain ATCC 35395 / DSM 2834 / JCM 12185 / C2A)).